A 106-amino-acid chain; its full sequence is Replication protein A 14 kDa subunit B (106 aa).

Residue methionine 1 is modified to N-acetylmethionine.

This sequence belongs to the replication factor A protein 3 family. In terms of assembly, component of the heterotrimeric canonical replication protein A complex (RPA).

The protein resides in the nucleus. Functionally, as part of the replication protein A (RPA/RP-A), a single-stranded DNA-binding heterotrimeric complex, may play an essential role in DNA replication, recombination and repair. Binds and stabilizes single-stranded DNA intermediates, preventing complementary DNA reannealing and recruiting different proteins involved in DNA metabolism. In Arabidopsis thaliana (Mouse-ear cress), this protein is Replication protein A 14 kDa subunit B (RPA3B).